Reading from the N-terminus, the 340-residue chain is Protein-arginine kinase (340 aa).

The Phosphagen kinase C-terminal domain occupies 14-244 (IVITTRIRLA…EQIINQENLS (231 aa)). ATP-binding positions include 17-21 (TTRIR), H81, R115, 166-170 (RASVM), and 197-202 (RGLWGE).

Belongs to the ATP:guanido phosphotransferase family.

The catalysed reaction is L-arginyl-[protein] + ATP = N(omega)-phospho-L-arginyl-[protein] + ADP + H(+). Its function is as follows. Catalyzes the specific phosphorylation of arginine residues in proteins. In Clostridium acetobutylicum (strain ATCC 824 / DSM 792 / JCM 1419 / IAM 19013 / LMG 5710 / NBRC 13948 / NRRL B-527 / VKM B-1787 / 2291 / W), this protein is Protein-arginine kinase.